A 607-amino-acid polypeptide reads, in one-letter code: Zinc finger protein 750 (607 aa).

The segment at 25–51 adopts a CCHC-type zinc-finger fold; the sequence is YQCFQCPFTCNIKSHLFNHMKYNLCKN. Zn(2+)-binding residues include C27, C30, H43, and C49. Residues 60-78 are compositionally biased toward polar residues; that stretch reads MEQTGKASRASQHSPAFSH. 4 disordered regions span residues 60–133, 318–467, 482–511, and 575–607; these read MEQT…DKSE, RAVQ…SSQE, QALP…QDLE, and GQKR…SQNC. 2 stretches are compositionally biased toward basic and acidic residues: residues 79-133 and 318-334; these read NSKE…DKSE and RAVQ…RESP. Over residues 369–380 the composition is skewed to low complexity; it reads HSGSQSHIISGS. A compositionally biased stretch (acidic residues) spans 421–432; the sequence is DKEEDEETEEEI. The span at 452 to 462 shows a compositional bias: basic and acidic residues; it reads HYPDRELHYDS. A compositionally biased stretch (polar residues) spans 496-507; that stretch reads ISNAEVSTTESP. Positions 579-592 are enriched in basic residues; the sequence is ANNRPLRHTNKRAK.

Its subcellular location is the nucleus. Transcription factor involved in epidermis differentiation. The protein is Zinc finger protein 750 (znf750) of Danio rerio (Zebrafish).